We begin with the raw amino-acid sequence, 130 residues long: Glycoprotein hormone beta-5 (130 aa).

Residues 1–24 (MKLVYLVLGAVALLLLGGPDSVLS) form the signal peptide. Intrachain disulfides connect Cys36–Cys84, Cys50–Cys99, Cys60–Cys115, Cys64–Cys117, and Cys120–Cys127. The N-linked (GlcNAc...) asparagine glycan is linked to Asn87.

This sequence belongs to the glycoprotein hormones subunit beta family. As to quaternary structure, heterodimer with GPHA2; this heterodimer interacts with thyroid-stimulating hormone receptor (TSHR), and hence stimulates cAMP production. In terms of processing, N-glycosylated. In terms of tissue distribution, expressed in the anterior lobe of pituitary.

The protein resides in the secreted. Functions as a heterodimeric glycoprotein hormone with GPHA2 able to bind and activate the thyroid-stimulating hormone receptor (TSHR), leading to increased cAMP production. Plays a central role in controlling thyroid cell metabolism. The protein is Glycoprotein hormone beta-5 (Gphb5) of Mus musculus (Mouse).